The primary structure comprises 246 residues: DNA repair protein RecO (246 aa).

The protein belongs to the RecO family.

Functionally, involved in DNA repair and RecF pathway recombination. The chain is DNA repair protein RecO from Methylorubrum extorquens (strain PA1) (Methylobacterium extorquens).